Reading from the N-terminus, the 277-residue chain is MKLTGEVVLITGGASGLGRALVDRFVAERAKVAVLDKSAERLAQLETDHGDNVLGVTGDVRSLEDQKQAASRCVAKFGKIDTLIPNAGIWDYSTALIDLPEESLDAAFDEVFHINVKGYIHAVKACLPALVASRGNVIFTISNAGFYPNGGGPLYTAAKHAVVGLVRELAFELAPYVRVNGVGPGGINSDLRGPSSLGMGGKAISTVPLADMLKSVLPIGRMPEAEEYTGAYVFFATRGDAAPATGALLNYDGGLGVRGFFSGAGGNDLLERLNINS.

9 to 33 (LITGGASGLGRALVDRFVAERAKVA) contributes to the NAD(+) binding site. Serine 142 contacts substrate. The active-site Proton acceptor is the tyrosine 155.

It belongs to the short-chain dehydrogenases/reductases (SDR) family. As to quaternary structure, homotetramer.

The catalysed reaction is (2R,3S)-3-phenylcyclohexa-3,5-diene-1,2-diol + NAD(+) = biphenyl-2,3-diol + NADH + H(+). It functions in the pathway xenobiotic degradation; biphenyl degradation; 2-hydroxy-2,4-pentadienoate and benzoate from biphenyl: step 2/4. In Pseudomonas putida (Arthrobacter siderocapsulatus), this protein is Cis-2,3-dihydrobiphenyl-2,3-diol dehydrogenase (bphB).